The following is a 143-amino-acid chain: Large ribosomal subunit protein uL16 (143 aa).

It belongs to the universal ribosomal protein uL16 family. Part of the 50S ribosomal subunit.

In terms of biological role, binds 23S rRNA and is also seen to make contacts with the A and possibly P site tRNAs. This chain is Large ribosomal subunit protein uL16, found in Tropheryma whipplei (strain TW08/27) (Whipple's bacillus).